The chain runs to 786 residues: uncharacterized protein (786 aa).

361–362 (WD) is a substrate binding site. Glu-488 acts as the Proton donor in catalysis. Residue 590–591 (KQ) participates in substrate binding. Positions 762–786 (TRKPLLPPPPQPPGREPVHRRALAR) are disordered. A compositionally biased stretch (pro residues) spans 766-776 (LLPPPPQPPGR).

Belongs to the glycosyl hydrolase 65 family.

This is an uncharacterized protein from Mycobacterium tuberculosis (strain CDC 1551 / Oshkosh).